We begin with the raw amino-acid sequence, 60 residues long: Large ribosomal subunit protein bL32 (60 aa).

This sequence belongs to the bacterial ribosomal protein bL32 family.

This Latilactobacillus sakei subsp. sakei (strain 23K) (Lactobacillus sakei subsp. sakei) protein is Large ribosomal subunit protein bL32.